Reading from the N-terminus, the 28-residue chain is Cyclotide vodo I2 (28 aa).

3 disulfide bridges follow: cysteine 4/cysteine 18, cysteine 8/cysteine 20, and cysteine 13/cysteine 25.

Post-translationally, this is a cyclic peptide. Contains 3 disulfide bonds.

In terms of biological role, probably participates in a plant defense mechanism. This Viola odorata (Sweet violet) protein is Cyclotide vodo I2.